The sequence spans 775 residues: 5-methyltetrahydropteroyltriglutamate--homocysteine methyltransferase (775 aa).

5-methyltetrahydropteroyltri-L-glutamate contacts are provided by residues 16 to 19 (REMK) and K115. L-homocysteine is bound by residues 435-437 (IGS) and E488. Residues 435-437 (IGS) and E488 contribute to the L-methionine site. 5-methyltetrahydropteroyltri-L-glutamate-binding positions include 519–520 (RC) and W565. Position 603 (D603) interacts with L-homocysteine. D603 contributes to the L-methionine binding site. E609 is a binding site for 5-methyltetrahydropteroyltri-L-glutamate. Positions 645, 647, and 669 each coordinate Zn(2+). Residue H698 is the Proton donor of the active site. Position 730 (C730) interacts with Zn(2+).

It belongs to the vitamin-B12 independent methionine synthase family. The cofactor is Zn(2+).

It carries out the reaction 5-methyltetrahydropteroyltri-L-glutamate + L-homocysteine = tetrahydropteroyltri-L-glutamate + L-methionine. The protein operates within amino-acid biosynthesis; L-methionine biosynthesis via de novo pathway; L-methionine from L-homocysteine (MetE route): step 1/1. Its function is as follows. Catalyzes the transfer of a methyl group from 5-methyltetrahydrofolate to homocysteine resulting in methionine formation. This is 5-methyltetrahydropteroyltriglutamate--homocysteine methyltransferase from Coxiella burnetii (strain CbuK_Q154) (Coxiella burnetii (strain Q154)).